The primary structure comprises 357 residues: MERGAGASEKGTVLVTGASGFVGSWLVMKLLQAGYTVRATVRDPANVGKTKPLMDLPGATERLSIWKADLAEEGSFHDAIRGCTGVFHVATPMDFLSKDPENEVIKPTVEGMISIMRACKEAGTVRRIVFTSSAGTVNLEERQRPVYDEESWTDVDFCRRVKMTGWMYFVSKTLAEKAALAYAAEHGLDLVTIIPTLVVGPFISASMPPSLITALALITGNAPHYSILKQVQLIHLDDLCDAEIFLFENPAAAGRYVCSSHDVTIHGLAAMLRDRYPEYDVPQRFPGIQDDLQPVRFSSKKLQDLGFTFRYKTLEDMFDAAIRTCQEKGLIPLATAAGGDGFASVRAPGETEATIGA.

Residues K49 and Y168 each contribute to the NADP(+) site.

This sequence belongs to the NAD(P)-dependent epimerase/dehydratase family. Dihydroflavonol-4-reductase subfamily.

It catalyses the reaction a (2R,3S,4S)-leucoanthocyanidin + NADP(+) = a (2R,3R)-dihydroflavonol + NADPH + H(+). The enzyme catalyses (2S)-flavan-4-ol + NADP(+) = (2S)-flavanone + NADPH + H(+). It functions in the pathway pigment biosynthesis; anthocyanin biosynthesis. Its function is as follows. Bifunctional enzyme involved in flavonoid metabolism. The sequence is that of Dihydroflavonol 4-reductase (A1) from Zea mays (Maize).